The sequence spans 272 residues: Dermonecrotic toxin StSicTox-betaIC1 (272 aa).

H5 is an active-site residue. Residues E25 and D27 each coordinate Mg(2+). The Nucleophile role is filled by H41. Cystine bridges form between C45-C51 and C47-C191. D85 serves as a coordination point for Mg(2+).

The protein belongs to the arthropod phospholipase D family. Class II subfamily. Class IIb sub-subfamily. Mg(2+) is required as a cofactor. In terms of tissue distribution, expressed by the venom gland.

Its subcellular location is the secreted. The catalysed reaction is an N-(acyl)-sphingosylphosphocholine = an N-(acyl)-sphingosyl-1,3-cyclic phosphate + choline. The enzyme catalyses N-hexanoyl-sphing-4-enine-1-phosphocholine = N-(hexanoyl)-sphing-4-enine-1,3-cyclic phosphate + choline. It carries out the reaction an N-(acyl)-sphingosylphosphoethanolamine = an N-(acyl)-sphingosyl-1,3-cyclic phosphate + ethanolamine. It catalyses the reaction N-dodecanoyl-heptadecasphing-4-enine-1-phosphoethanolamine = N-dodecanoyl-heptadecasphing-4-enine-1,3-cyclic phosphate + ethanolamine. The catalysed reaction is a 1-acyl-sn-glycero-3-phosphoethanolamine = a 1-acyl-sn-glycero-2,3-cyclic phosphate + ethanolamine. The enzyme catalyses 1-tetradecanoyl-sn-glycero-3-phosphoethanolamine = 1-tetradecanoyl-sn-glycero-2,3-cyclic phosphate + ethanolamine. Dermonecrotic toxins cleave the phosphodiester linkage between the phosphate and headgroup of certain phospholipids (sphingolipid and lysolipid substrates), forming an alcohol (often choline) and a cyclic phosphate. This toxin acts on lysophosphatidylethanolamine (LPE) and ceramide phosphoethanolamine (CPE) with high activity. This toxin acts on sphingomyelin (SM) with very low activity and is not active on lysophosphatidylserine (LPS), lysophosphatidylcholine (LPC) and lysophosphatidylglycerol (LPG). It acts by transphosphatidylation, releasing exclusively cyclic phosphate as second products. It is not surprising that spider toxins have affinity for ethanolamine-containing sphingolipids since they are common in insect prey. Induces dermonecrosis, hemolysis, increased vascular permeability, edema, inflammatory response, and platelet aggregation. The polypeptide is Dermonecrotic toxin StSicTox-betaIC1 (Sicarius terrosus (Cave spider)).